The primary structure comprises 330 residues: DNA-directed RNA polymerase subunit alpha (330 aa).

Residues M1–K232 form an alpha N-terminal domain (alpha-NTD) region. Residues E248–D330 form an alpha C-terminal domain (alpha-CTD) region.

The protein belongs to the RNA polymerase alpha chain family. As to quaternary structure, homodimer. The RNAP catalytic core consists of 2 alpha, 1 beta, 1 beta' and 1 omega subunit. When a sigma factor is associated with the core the holoenzyme is formed, which can initiate transcription.

The catalysed reaction is RNA(n) + a ribonucleoside 5'-triphosphate = RNA(n+1) + diphosphate. Functionally, DNA-dependent RNA polymerase catalyzes the transcription of DNA into RNA using the four ribonucleoside triphosphates as substrates. In Porphyromonas gingivalis (strain ATCC BAA-308 / W83), this protein is DNA-directed RNA polymerase subunit alpha.